We begin with the raw amino-acid sequence, 336 residues long: UDP-galactose transporter 1 (336 aa).

The next 9 membrane-spanning stretches (helical) occupy residues 11 to 31 (LAIL…KWIF), 38 to 58 (FPLS…YIVI), 83 to 103 (FVFC…PVSF), 131 to 151 (IWAS…TELS), 154 to 174 (MFGF…TILA), 193 to 213 (APFA…SGIL), 227 to 247 (IIIL…FYVI), 254 to 274 (TFNV…WLIF), and 278 to 298 (ISYM…FYGY).

The protein belongs to the TPT transporter family. TPT (TC 2.A.7.9) subfamily.

The protein localises to the membrane. Functionally, nucleotide sugar transporter that specifically transports UDP-galactose. This is UDP-galactose transporter 1 from Arabidopsis thaliana (Mouse-ear cress).